A 160-amino-acid chain; its full sequence is uncharacterized protein (160 aa).

Residues 8–28 (LLFILVFISGFILFTVYSYTA) form a helical membrane-spanning segment.

It localises to the membrane. This is an uncharacterized protein from Escherichia coli (strain K12).